Reading from the N-terminus, the 165-residue chain is Shikimate kinase (165 aa).

Position 11–16 (11–16 (GAGKTT)) interacts with ATP. A Mg(2+)-binding site is contributed by threonine 15. Substrate is bound by residues aspartate 33, arginine 57, and glycine 78. Residue arginine 116 participates in ATP binding. Arginine 134 is a substrate binding site.

This sequence belongs to the shikimate kinase family. In terms of assembly, monomer. Mg(2+) serves as cofactor.

It is found in the cytoplasm. It catalyses the reaction shikimate + ATP = 3-phosphoshikimate + ADP + H(+). It functions in the pathway metabolic intermediate biosynthesis; chorismate biosynthesis; chorismate from D-erythrose 4-phosphate and phosphoenolpyruvate: step 5/7. Catalyzes the specific phosphorylation of the 3-hydroxyl group of shikimic acid using ATP as a cosubstrate. This chain is Shikimate kinase, found in Bacillus cereus (strain G9842).